Here is a 346-residue protein sequence, read N- to C-terminus: Dehydrogenase azaJ (346 aa).

43–48 provides a ligand contact to NADP(+); that stretch reads VDYATQ. 133-140 contacts substrate; sequence LAFSTAIV. NADP(+) contacts are provided by residues 170–173, 193–196, Tyr-211, and 251–252; these read ATSV, SPHN, and LN. 269–273 contacts substrate; that stretch reads APPNV. 336-337 contacts NADP(+); it reads VS.

This sequence belongs to the zinc-containing alcohol dehydrogenase family.

It functions in the pathway secondary metabolite biosynthesis. Dehydrogenase; part of the gene cluster that mediates the biosynthesis of azaphilones, a class of fungal metabolites characterized by a highly oxygenated pyrano-quinone bicyclic core and exhibiting a broad range of bioactivities. In the first step, the non-reducing polyketide synthase azaA forms the hexaketide precursor from successive condensations of five malonyl-CoA units, presumably with a simple acetyl-CoA starter unit. The reactive polyketide chain then undergoes a PT-mediated C2-C7 cyclization to afford the aromatic ring and is eventually released as an aldehyde through the R-domain. The putative ketoreductase azaE is proposed to catalyze the reduction of the terminal ketone resulting in the early culture product FK17-P2a. The monooxygenase azaH was demonstrated to be the only enzyme required to convert FK17-P2a to azanigerone E. AzaH first hydroxylates the benzaldehyde intermediate FK17-P2a at C4, which triggers the formation of the pyran-ring to afford azanigerone E. In parallel, the 2,4-dimethylhexanoyl chain is synthesized by the HR-PKS azaB and is proposed to be transferred to the C4-hydroxyl of azanigerone E by the acyltransferase azaD directly from the ACP domain of azaB. Alternatively, the 2,4-dimethyl-hexanoyl chain may be offloaded from the HR-PKS as a carboxylic acid and converted to an acyl-CoA by azaF. The resulting acyl-CoA molecule could then be taken up as a substrate by AzaD to form azanigerone B. To yield the carboxylic acid substituent in azanigerone A, the hydroxypropyl side chain of azanigerone B would need to undergo a C-C oxidative cleavage catalyzed by cytochrome P450 AzaI. AzaI is proposed to act on a vicinal diol that leads to a C-C bond scission either through an alkoxyradical intermediate or a peroxy complex. In the biosynthesis of azanigerone A, azanigerone B first undergoes hydroxylation at C10, possibly catalyzed by one of the two FAD-dependent monooxygenases encoded in the cluster, azaG or azaL, resulting in the vicinal diol azanigerone C. Oxidative cleavage of azanigerone C by azaI would yield the corresponding aldehyde derivative of azanigerone A. Finally, the dehydrogenase azaJ is proposed to convert the aldehyde functional group into the carboxylic acid, completing the conversion from azanigerone B to azanigerone A. Alternatively, the oxidation of aldehyde to carboxylic acid may be catalyzed by the same P450 enzyme azaI via consecutive oxidation or by endogenous alcohol dehydrogenase. This Aspergillus niger (strain ATCC 1015 / CBS 113.46 / FGSC A1144 / LSHB Ac4 / NCTC 3858a / NRRL 328 / USDA 3528.7) protein is Dehydrogenase azaJ.